The following is a 667-amino-acid chain: Alpha-1,4-glucan:maltose-1-phosphate maltosyltransferase (667 aa).

Positions 261, 321, and 356 each coordinate alpha-maltose 1-phosphate. Residue D392 is the Nucleophile of the active site. N393 serves as a coordination point for alpha-maltose 1-phosphate. E421 acts as the Proton donor in catalysis. Alpha-maltose 1-phosphate is bound at residue K534–Y535.

The protein belongs to the glycosyl hydrolase 13 family. GlgE subfamily. In terms of assembly, homodimer.

It catalyses the reaction alpha-maltose 1-phosphate + [(1-&gt;4)-alpha-D-glucosyl](n) = [(1-&gt;4)-alpha-D-glucosyl](n+2) + phosphate. Its function is as follows. Maltosyltransferase that uses maltose 1-phosphate (M1P) as the sugar donor to elongate linear or branched alpha-(1-&gt;4)-glucans. Is involved in a branched alpha-glucan biosynthetic pathway from trehalose, together with TreS, Mak and GlgB. The chain is Alpha-1,4-glucan:maltose-1-phosphate maltosyltransferase from Methylacidiphilum infernorum (isolate V4) (Methylokorus infernorum (strain V4)).